A 216-amino-acid polypeptide reads, in one-letter code: Endoplasmic reticulum vesicle protein 25 (216 aa).

Residues 1–25 form the signal peptide; that stretch reads MGSSRLAMRSALGLFFLLFVQISLA. The Lumenal segment spans residues 26–185; the sequence is LKFDIAAGKG…TNESTNERVK (160 aa). In terms of domain architecture, GOLD spans 36–126; the sequence is ERCIRNFVLK…HRSIELDVDI (91 aa). Residues 186–206 form a helical membrane-spanning segment; the sequence is WFAFGTMGMLVGLGVWQVIYL. The Cytoplasmic portion of the chain corresponds to 207–216; that stretch reads RAYFRSKHLI.

It belongs to the EMP24/GP25L family.

Its subcellular location is the endoplasmic reticulum membrane. It is found in the golgi apparatus membrane. Its function is as follows. Constituent of COPII-coated endoplasmic reticulum-derived transport vesicles. Required for efficient transport of a subset of secretory proteins to the Golgi. Facilitates retrograde transport from the Golgi to the endoplasmic reticulum. The protein is Endoplasmic reticulum vesicle protein 25 (erv25) of Emericella nidulans (strain FGSC A4 / ATCC 38163 / CBS 112.46 / NRRL 194 / M139) (Aspergillus nidulans).